Here is a 292-residue protein sequence, read N- to C-terminus: uncharacterized protein (292 aa).

Residues 13-35 (LFILFIIVVCIYLLPRVAINAFY) traverse the membrane as a helical segment.

This sequence belongs to the serine esterase family.

It is found in the membrane. This is an uncharacterized protein from Salmonella typhi.